The primary structure comprises 468 residues: Glutamate--tRNA ligase (468 aa).

A 'HIGH' region motif is present at residues 10 to 20 (PSPTGYLHIGG). The 'KMSKS' region signature appears at 252–256 (KLSKR). Residue Lys-255 participates in ATP binding.

This sequence belongs to the class-I aminoacyl-tRNA synthetase family. Glutamate--tRNA ligase type 1 subfamily. Monomer.

The protein resides in the cytoplasm. The enzyme catalyses tRNA(Glu) + L-glutamate + ATP = L-glutamyl-tRNA(Glu) + AMP + diphosphate. Catalyzes the attachment of glutamate to tRNA(Glu) in a two-step reaction: glutamate is first activated by ATP to form Glu-AMP and then transferred to the acceptor end of tRNA(Glu). This chain is Glutamate--tRNA ligase, found in Mycoplasmopsis pulmonis (strain UAB CTIP) (Mycoplasma pulmonis).